We begin with the raw amino-acid sequence, 513 residues long: Sugar transport protein 7 (513 aa).

Over 1-26 (MAGGSFGPTGVAKERAEQYQGKVTSY) the chain is Cytoplasmic. Helical transmembrane passes span 27 to 47 (VIIA…DIGI), 84 to 104 (GLAA…LVAS), 121 to 141 (ISFL…MLLA), 144 to 164 (IMLG…LSEV), 171 to 191 (GGLN…ANMV), 205 to 225 (LSLG…YFLP), 286 to 306 (LVMA…SILF), 324 to 344 (YSSA…IGLV), 351 to 371 (ALLI…AVIL), 387 to 407 (VIVV…WGPL), 427 to 447 (ITVA…LGLL), and 452 to 472 (FGIF…VYFL). Residues 473-513 (LPETKGVPIEEMTLLWSKHWFWKKVLPDATNLEDESKNVSV) lie on the Cytoplasmic side of the membrane.

The protein belongs to the major facilitator superfamily. Sugar transporter (TC 2.A.1.1) family.

It localises to the cell membrane. Functionally, mediates an active uptake of hexoses, probably by sugar/hydrogen symport. This chain is Sugar transport protein 7 (STP7), found in Arabidopsis thaliana (Mouse-ear cress).